The sequence spans 134 residues: Protein NrdI (134 aa).

The protein belongs to the NrdI family.

In terms of biological role, probably involved in ribonucleotide reductase function. The sequence is that of Protein NrdI from Serratia proteamaculans (strain 568).